A 475-amino-acid chain; its full sequence is Adenosylhomocysteinase (475 aa).

Positions 66, 141, and 201 each coordinate substrate. 202–204 contacts NAD(+); that stretch reads TTT. Substrate is bound by residues lysine 231 and aspartate 235. Residues asparagine 236, 265-270, glutamate 288, asparagine 323, 344-346, and asparagine 389 contribute to the NAD(+) site; these read GYGEVG and IGH.

The protein belongs to the adenosylhomocysteinase family. NAD(+) is required as a cofactor.

It localises to the cytoplasm. The catalysed reaction is S-adenosyl-L-homocysteine + H2O = L-homocysteine + adenosine. It functions in the pathway amino-acid biosynthesis; L-homocysteine biosynthesis; L-homocysteine from S-adenosyl-L-homocysteine: step 1/1. Its function is as follows. May play a key role in the regulation of the intracellular concentration of adenosylhomocysteine. The chain is Adenosylhomocysteinase from Geobacter sulfurreducens (strain ATCC 51573 / DSM 12127 / PCA).